A 371-amino-acid polypeptide reads, in one-letter code: Jasmonate-induced oxygenase 2 (371 aa).

The region spanning 219-320 is the Fe2OG dioxygenase domain; that stretch reads NIGACLRVNY…RVSLAFFYNP (102 aa). A jasmonate-binding site is contributed by R225. 2 residues coordinate 2-oxoglutarate: N227 and Y229. Positions 244, 246, and 301 each coordinate Fe cation. 2-oxoglutarate contacts are provided by R311 and S313. The jasmonate site is built by R350 and R354.

This sequence belongs to the iron/ascorbate-dependent oxidoreductase family. The cofactor is L-ascorbate. It depends on Fe(2+) as a cofactor.

The catalysed reaction is jasmonate + 2-oxoglutarate + O2 = (1R,2R)-12-hydroxyjasmonate + succinate + CO2. 2-oxoglutarate-dependent dioxygenase involved in the oxidation of jasmonate (JA), a stress-induced phytohormone synthesized in response to attack by pathogens and herbivores, which triggers the activation of defense responses via the JA-mediated signaling pathway. Converts JA to 12-hydroxyjasmonate (12OH-JA), an inactive form of JA. Is specific to free JA, and cannot oxidize the bioactive form jasmonoyl-L-isoleucine (JA-Ile) or other JA-amino acid conjugates. Prevents over-accumulation of JA and indirectly its bioactive form JA-Ile under stress response. Acts as a negative regulator of JA-mediated defense signaling, by contributing to 12OH-JA accumulation, which represses JA defense responses upon infection by the fungal pathogen Botrytis cinerea. Acts as a negative regulator of JA-mediated defense responses upon infestation by the herbivorous caterpillar Mamestra brassicae. May be involved in the catabolism of cytotoxic polycyclic aromatic hydrocarbons (PAHs). This chain is Jasmonate-induced oxygenase 2, found in Arabidopsis thaliana (Mouse-ear cress).